The sequence spans 239 residues: Purine nucleoside phosphorylase DeoD-type (239 aa).

His-5 serves as a coordination point for a purine D-ribonucleoside. Residues Gly-21, Arg-25, Arg-44, and 88 to 91 contribute to the phosphate site; that span reads RVGS. Residues 180–182 and 204–205 each bind a purine D-ribonucleoside; these read EME and SD. Asp-205 acts as the Proton donor in catalysis.

This sequence belongs to the PNP/UDP phosphorylase family. As to quaternary structure, homohexamer; trimer of homodimers.

The catalysed reaction is a purine D-ribonucleoside + phosphate = a purine nucleobase + alpha-D-ribose 1-phosphate. The enzyme catalyses a purine 2'-deoxy-D-ribonucleoside + phosphate = a purine nucleobase + 2-deoxy-alpha-D-ribose 1-phosphate. Functionally, catalyzes the reversible phosphorolytic breakdown of the N-glycosidic bond in the beta-(deoxy)ribonucleoside molecules, with the formation of the corresponding free purine bases and pentose-1-phosphate. This Salmonella heidelberg (strain SL476) protein is Purine nucleoside phosphorylase DeoD-type.